The following is a 660-amino-acid chain: Zeaxanthin epoxidase, chloroplastic (660 aa).

The N-terminal 49 residues, 1–49 (MYASSARDGIPGKWCNARRKQLPLLISKDFPAELYHSLPCKSLENGHIK), are a transit peptide targeting the chloroplast. Residues 79–107 (KVLV…LVFE) and 357–370 (TFSW…LLGD) contribute to the FAD site. The FHA domain maps to 545–609 (LVLSRDENMP…HGTWFIDNEG (65 aa)).

FAD serves as cofactor.

The protein resides in the plastid. Its subcellular location is the chloroplast membrane. It localises to the chloroplast thylakoid membrane. The catalysed reaction is all-trans-zeaxanthin + 4 reduced [2Fe-2S]-[ferredoxin] + 2 O2 + 4 H(+) = all-trans-violaxanthin + 4 oxidized [2Fe-2S]-[ferredoxin] + 2 H2O. It catalyses the reaction all-trans-zeaxanthin + 2 reduced [2Fe-2S]-[ferredoxin] + O2 + 2 H(+) = all-trans-antheraxanthin + 2 oxidized [2Fe-2S]-[ferredoxin] + H2O. It carries out the reaction all-trans-antheraxanthin + 2 reduced [2Fe-2S]-[ferredoxin] + O2 + 2 H(+) = all-trans-violaxanthin + 2 oxidized [2Fe-2S]-[ferredoxin] + H2O. The enzyme catalyses beta-cryptoxanthin + 2 reduced [2Fe-2S]-[ferredoxin] + O2 + 2 H(+) = (5R,6S)-5,6-epoxi-beta-cryptoxanthin + 2 oxidized [2Fe-2S]-[ferredoxin] + H2O. It functions in the pathway plant hormone biosynthesis; abscisate biosynthesis. Functionally, converts zeaxanthin into antheraxanthin and subsequently violaxanthin. Also acts on beta-cryptoxanthin. Involved in the epoxidation of zeaxanthin. The chain is Zeaxanthin epoxidase, chloroplastic from Capsicum annuum (Capsicum pepper).